The sequence spans 90 residues: Small ribosomal subunit protein uS15 (90 aa).

It belongs to the universal ribosomal protein uS15 family. As to quaternary structure, part of the 30S ribosomal subunit. Forms a bridge to the 50S subunit in the 70S ribosome, contacting the 23S rRNA.

One of the primary rRNA binding proteins, it binds directly to 16S rRNA where it helps nucleate assembly of the platform of the 30S subunit by binding and bridging several RNA helices of the 16S rRNA. In terms of biological role, forms an intersubunit bridge (bridge B4) with the 23S rRNA of the 50S subunit in the ribosome. The polypeptide is Small ribosomal subunit protein uS15 (Mycoplasmoides gallisepticum (strain R(low / passage 15 / clone 2)) (Mycoplasma gallisepticum)).